Reading from the N-terminus, the 858-residue chain is MPNFDAHTPMMKQYLTIKAENPDILLFYRMGDFYEMFYDDAKKAAALLDISLTKRGQSAGRPIPMAGVPYHAVEGYLAKLVQLGESVAICEQIGDPAASKGPVERKIVRIVTPGTVSDENLLPERQDNLLVAVYQEKDRFGLASLDMSSGRFQIAEAENAETLHAELQRLQPAELLYSEDFSEMAIIEQTKGLRRRPIWEFELGTAVQLLNRQFGTKDLKAFGVEKAVLGLCAAGCLFQYAKETQRTALPHIKSISLVQNSDTVQLDAATRRNLELTRNLSGGTENTLASVLDKCVTPMGSRLLKRWIHQPIRKIQKLRQRQQTIAAILQDDLIDELQPLLRQVGDMERILARVALRTARPRDLTRLRTALEQLPQLQQIIKTLQNLTALSQPMGEFAELCDLLQRAIIDSPPLLIRDGGVIAPGYHAELDEWRSLADGATQYLADLERRERESTGIDTLKIGYNAVHGYYIQISQGQAHNAPMHYVRRQTLKNAERYIIPELKTYEDKVLKAKGAALALEKQLYEEIFDQLLPHLAALQLSSMTLAELDVLTNLAERAETLNYVCPEFSPEIGVEIQNGRHPVVEQVLKEPFIANPVCLNPQRRLLVITGPNMGGKSTYMRQTALITLMAYMGGFVPAERAVIGPIDRIFTRIGASDDLASGRSTFMVEMTEMANILHQATADSLVLIDEIGRGTSTYDGLSLAWACAEWLAKKLRSLTLFATHYFELTVLPEQFAGTANVHLDALEHDNTIAFMHAVQDGAASKSYGLAVAALAGVPQQVIKLAKQKLAQLEKLSAQSADQKLQDLRTLHQMQGELALMEEDDGKNAALEMLEKLDPDELSPKQALAYLYQLKTLL.

611–618 (GPNMGGKS) contacts ATP.

Belongs to the DNA mismatch repair MutS family.

Functionally, this protein is involved in the repair of mismatches in DNA. It is possible that it carries out the mismatch recognition step. This protein has a weak ATPase activity. The sequence is that of DNA mismatch repair protein MutS from Actinobacillus succinogenes (strain ATCC 55618 / DSM 22257 / CCUG 43843 / 130Z).